A 162-amino-acid polypeptide reads, in one-letter code: Protein S40-4 (162 aa).

This sequence belongs to the senescence regulator S40 family.

Its subcellular location is the cytoplasm. This is Protein S40-4 from Arabidopsis thaliana (Mouse-ear cress).